A 94-amino-acid chain; its full sequence is Pyrimidine/purine nucleoside phosphorylase (94 aa).

Belongs to the nucleoside phosphorylase PpnP family.

The enzyme catalyses a purine D-ribonucleoside + phosphate = a purine nucleobase + alpha-D-ribose 1-phosphate. The catalysed reaction is adenosine + phosphate = alpha-D-ribose 1-phosphate + adenine. It carries out the reaction cytidine + phosphate = cytosine + alpha-D-ribose 1-phosphate. It catalyses the reaction guanosine + phosphate = alpha-D-ribose 1-phosphate + guanine. The enzyme catalyses inosine + phosphate = alpha-D-ribose 1-phosphate + hypoxanthine. The catalysed reaction is thymidine + phosphate = 2-deoxy-alpha-D-ribose 1-phosphate + thymine. It carries out the reaction uridine + phosphate = alpha-D-ribose 1-phosphate + uracil. It catalyses the reaction xanthosine + phosphate = alpha-D-ribose 1-phosphate + xanthine. Its function is as follows. Catalyzes the phosphorolysis of diverse nucleosides, yielding D-ribose 1-phosphate and the respective free bases. Can use uridine, adenosine, guanosine, cytidine, thymidine, inosine and xanthosine as substrates. Also catalyzes the reverse reactions. This is Pyrimidine/purine nucleoside phosphorylase from Salmonella arizonae (strain ATCC BAA-731 / CDC346-86 / RSK2980).